A 312-amino-acid chain; its full sequence is MNELRIVFMGSPEFALTPLKMLLAEGYAICGVYTQPDRPAGRGRELCPPPVKALALERGLAVYQPQSLKKPEEQAVLSGLKPDVIVVAAYGLILPQAVLDIPAYGVLNIHPSLLPRYRGATPVAATLLGGDEWAGVSLMKLEAGLDTGPVYSRAAIPVRPEDTTPLLADKLAFIGGCLLLELLSRIPSLPQPELQDNAKATYFGMVTKDMGQVNWQTPAAEIERRVRAFFPWPGVFTSYNQKTLKILEARPQKLGLGLQPSQVRVYEGDRIMVGSASGELEIIRLQLEGKAACSAADFLRGQRHFDGVNLGV.

112–115 lines the (6S)-5,6,7,8-tetrahydrofolate pocket; it reads SLLP.

Belongs to the Fmt family.

The enzyme catalyses L-methionyl-tRNA(fMet) + (6R)-10-formyltetrahydrofolate = N-formyl-L-methionyl-tRNA(fMet) + (6S)-5,6,7,8-tetrahydrofolate + H(+). Its function is as follows. Attaches a formyl group to the free amino group of methionyl-tRNA(fMet). The formyl group appears to play a dual role in the initiator identity of N-formylmethionyl-tRNA by promoting its recognition by IF2 and preventing the misappropriation of this tRNA by the elongation apparatus. This chain is Methionyl-tRNA formyltransferase, found in Dehalococcoides mccartyi (strain ATCC BAA-2266 / KCTC 15142 / 195) (Dehalococcoides ethenogenes (strain 195)).